The sequence spans 429 residues: Phosphoglucosamine mutase (429 aa).

Residue serine 96 is the Phosphoserine intermediate of the active site. Mg(2+)-binding residues include serine 96, aspartate 230, aspartate 232, and aspartate 234. Phosphoserine is present on serine 96.

This sequence belongs to the phosphohexose mutase family. Mg(2+) is required as a cofactor. Post-translationally, activated by phosphorylation.

It carries out the reaction alpha-D-glucosamine 1-phosphate = D-glucosamine 6-phosphate. Functionally, catalyzes the conversion of glucosamine-6-phosphate to glucosamine-1-phosphate. This chain is Phosphoglucosamine mutase, found in Thermotoga petrophila (strain ATCC BAA-488 / DSM 13995 / JCM 10881 / RKU-1).